The following is a 259-amino-acid chain: 3-hydroxypropionyl-coenzyme A dehydratase (259 aa).

Residue Glu113 is the Nucleophile of the active site. Glu133 functions as the Proton acceptor in the catalytic mechanism.

The protein belongs to the enoyl-CoA hydratase/isomerase family. As to quaternary structure, monomer.

The enzyme catalyses 3-hydroxypropanoyl-CoA = acryloyl-CoA + H2O. Plays a role in autotrophic carbon fixation via the 3-hydroxypropionate/4-hydroxybutyrate cycle. Catalyzes the reversible dehydration of 3-hydroxypropionyl-CoA to form acryloyl-CoA, and the reversible dehydration of (S)-3-hydroxybutyryl-CoA to form crotonyl-CoA. Inactive towards (R)-3-hydroxybutyryl-CoA. The sequence is that of 3-hydroxypropionyl-coenzyme A dehydratase from Metallosphaera sedula (strain ATCC 51363 / DSM 5348 / JCM 9185 / NBRC 15509 / TH2).